We begin with the raw amino-acid sequence, 105 residues long: Saimiri transformation-associated protein (105 aa).

Topologically, residues 1–75 (MASEPNLRYP…GPPGPSGLPG (75 aa)) are cytoplasmic. The tract at residues 1 to 75 (MASEPNLRYP…GPPGPSGLPG (75 aa)) is disordered. One can recognise a Collagen-like domain in the interval 15–74 (GDRGPQGPPGPPGPQGPPGPQGPPGPQGPPGPQGPPGPQGPPGPQGPPGPPGPPGPSGLP). The span at 20-71 (QGPPGPPGPQGPPGPQGPPGPQGPPGPQGPPGPQGPPGPQGPPGPPGPPGPS) shows a compositional bias: pro residues. A helical membrane pass occupies residues 76–96 (LFVTNLLLGIIILLLLIIVAI). Topologically, residues 97–105 (LLVSKLVVN) are extracellular.

As to quaternary structure, binds to host RAS and TRAF2.

It is found in the host membrane. In terms of biological role, acts synergistically with Tip to stimulate NF-kappa-B activity and interleukin-2 gene expression by binding to host TRAF proteins. Activation of NF-kappa-B protects lymphocytes from apoptosis, thereby facilitating viral induced cell transformation. This Saimiriine herpesvirus 2 (strain 484-77) (SaHV-2) protein is Saimiri transformation-associated protein.